Here is a 246-residue protein sequence, read N- to C-terminus: tRNA (guanine-N(7)-)-methyltransferase (246 aa).

4 residues coordinate S-adenosyl-L-methionine: Glu-76, Glu-101, Asp-128, and Asp-151. Asp-151 is an active-site residue. A substrate-binding site is contributed by Lys-155. The interaction with RNA stretch occupies residues 157–162; sequence RHNKRR. Substrate is bound by residues Asp-187 and 222-225; that span reads TKFE.

It belongs to the class I-like SAM-binding methyltransferase superfamily. TrmB family.

It catalyses the reaction guanosine(46) in tRNA + S-adenosyl-L-methionine = N(7)-methylguanosine(46) in tRNA + S-adenosyl-L-homocysteine. The protein operates within tRNA modification; N(7)-methylguanine-tRNA biosynthesis. Catalyzes the formation of N(7)-methylguanine at position 46 (m7G46) in tRNA. This is tRNA (guanine-N(7)-)-methyltransferase from Dechloromonas aromatica (strain RCB).